The primary structure comprises 49 residues: Large ribosomal subunit protein bL33 (49 aa).

It belongs to the bacterial ribosomal protein bL33 family.

The polypeptide is Large ribosomal subunit protein bL33 (Desulforudis audaxviator (strain MP104C)).